We begin with the raw amino-acid sequence, 305 residues long: Autophagy-related protein 14 (305 aa).

Positions lysine 34–arginine 147 form a coiled coil.

This sequence belongs to the ATG14 family. In terms of assembly, component of the autophagy-specific VPS34 PI3-kinase complex I.

The protein localises to the preautophagosomal structure membrane. The protein resides in the vacuole membrane. Its function is as follows. Required for cytoplasm to vacuole transport (Cvt) and autophagy as a part of the autophagy-specific VPS34 PI3-kinase complex I. This complex is essential to recruit the ATG8-phosphatidylinositol conjugate and the ATG12-ATG5 conjugate to the pre-autophagosomal structure. ATG14 mediates the specific binding of the VPS34 PI3-kinase complex I to the preautophagosomal structure (PAS). This is Autophagy-related protein 14 from Kluyveromyces marxianus (strain DMKU3-1042 / BCC 29191 / NBRC 104275) (Yeast).